A 182-amino-acid polypeptide reads, in one-letter code: Hexose transport activator protein (182 aa).

The interval G46–E65 is disordered.

Functionally, multicopy expression suppresses glucose-uptake defects in various yeast mutants. This chain is Hexose transport activator protein (AHT1), found in Saccharomyces cerevisiae (strain ATCC 204508 / S288c) (Baker's yeast).